We begin with the raw amino-acid sequence, 89 residues long: Cell division topological specificity factor (89 aa).

This sequence belongs to the MinE family.

Functionally, prevents the cell division inhibition by proteins MinC and MinD at internal division sites while permitting inhibition at polar sites. This ensures cell division at the proper site by restricting the formation of a division septum at the midpoint of the long axis of the cell. This Serratia proteamaculans (strain 568) protein is Cell division topological specificity factor.